Reading from the N-terminus, the 364-residue chain is Salivary endonuclease (364 aa).

The first 24 residues, 1 to 24 (MSSFFLSISPLVLALFHVVVQVCS), serve as a signal peptide directing secretion. N285 carries N-linked (GlcNAc...) asparagine glycosylation.

It belongs to the DNA/RNA non-specific endonuclease family. Mg(2+) serves as cofactor. As to expression, saliva (at protein level). Female salivary gland.

It localises to the secreted. In terms of biological role, hydrolyzes double-stranded DNA with no sequence specificity. Does not cleave ssDNA and RNA. May facilitate blood meal intake by lowering the local viscosity created by the release of host DNA. The protein is Salivary endonuclease of Culex quinquefasciatus (Southern house mosquito).